The following is a 205-amino-acid chain: Small ribosomal subunit protein uS4 (205 aa).

Residues 94 to 157 enclose the S4 RNA-binding domain; sequence SRLDTVVYRM…QQIPLIQESI (64 aa).

The protein belongs to the universal ribosomal protein uS4 family. As to quaternary structure, part of the 30S ribosomal subunit. Contacts protein S5. The interaction surface between S4 and S5 is involved in control of translational fidelity.

In terms of biological role, one of the primary rRNA binding proteins, it binds directly to 16S rRNA where it nucleates assembly of the body of the 30S subunit. Functionally, with S5 and S12 plays an important role in translational accuracy. This is Small ribosomal subunit protein uS4 from Rickettsia typhi (strain ATCC VR-144 / Wilmington).